The primary structure comprises 230 residues: Flagellar L-ring protein (230 aa).

Positions 1-22 are cleaved as a signal peptide; the sequence is MSPISNFARIALACTVAALLGG. A lipid anchor (N-palmitoyl cysteine) is attached at C23. C23 is lipidated: S-diacylglycerol cysteine.

Belongs to the FlgH family. As to quaternary structure, the basal body constitutes a major portion of the flagellar organelle and consists of four rings (L,P,S, and M) mounted on a central rod.

The protein localises to the cell outer membrane. It localises to the bacterial flagellum basal body. Its function is as follows. Assembles around the rod to form the L-ring and probably protects the motor/basal body from shearing forces during rotation. The sequence is that of Flagellar L-ring protein from Stenotrophomonas maltophilia (strain K279a).